The sequence spans 514 residues: MRSIKRRKKMANDKTLFDWVEDRKSTLEEMEQTDFFALPEFVERNLKYPFFEWQKSALENFLIFDRTSKLKDFPDIKNRPTHLLFNMATGAGKTMMMAALILYYFEKGYRHFLFFVNQNNIVDKTENNFTDPTHAKFLFTEKILQGDTVIPIRKVETFSPHSDGIEIKFTSIQKLYNDIHTEQENQTTLTDLHDLNLVMLGDEAHHLNAQTKGKKQGELDLEKEMNDRTSKAEIERKGWEHMVLELLLNKNGNPSENVLLEFTATLPENAEVQQKYADKIITKFGLKEFLQKGYTKEINLVSSTLGKKERVLHALLFAWYRHQIALKYGIANFKPVMLFRSKTIDESKADYLAFLNWVENVQAVDFSFLTTFLASLNDSDNANEQGKTRTEQALKFIQDNKFEFVHLADWVKQNYQKHNVIITNSETNKSKTEKTDSETEKLLNNLEAADNPIRAIFTVDRLTEGWDVLNLFDIVRLYEGQNGGGSNKKSGKSCRHRIRKAVNWSWRALFSICV.

This sequence belongs to the type III restriction-modification system Res protein family. Contains two different subunits: Res and Mod. Mg(2+) serves as cofactor. The cofactor is S-adenosyl-L-methionine.

It carries out the reaction Endonucleolytic cleavage of DNA to give specific double-stranded fragments with terminal 5'-phosphates.. A type III restriction enzyme that recognizes 2 inversely oriented double-stranded sequences 5'-CGAAT-3' and cleaves 25-27 base pairs downstream. After binding to one recognition site undergoes random one-dimensional diffusion along DNA until it collides with a stationary enzyme bound to the second DNA site, which is when DNA cleavage occurs. DNA restriction requires both the Res and Mod subunits. In Haemophilus influenzae (strain ATCC 51907 / DSM 11121 / KW20 / Rd), this protein is Probable type III restriction-modification enzyme HindVIP Res subunit.